A 500-amino-acid chain; its full sequence is Lysine--tRNA ligase (500 aa).

Positions 410 and 417 each coordinate Mg(2+).

Belongs to the class-II aminoacyl-tRNA synthetase family. Homodimer. Mg(2+) serves as cofactor.

Its subcellular location is the cytoplasm. It catalyses the reaction tRNA(Lys) + L-lysine + ATP = L-lysyl-tRNA(Lys) + AMP + diphosphate. This chain is Lysine--tRNA ligase, found in Pseudomonas syringae pv. syringae (strain B728a).